Reading from the N-terminus, the 466-residue chain is Soluble pyridine nucleotide transhydrogenase (466 aa).

36-45 (EKESSVGGGC) lines the FAD pocket.

It belongs to the class-I pyridine nucleotide-disulfide oxidoreductase family. Requires FAD as cofactor.

The protein resides in the cytoplasm. The catalysed reaction is NAD(+) + NADPH = NADH + NADP(+). Functionally, conversion of NADPH, generated by peripheral catabolic pathways, to NADH, which can enter the respiratory chain for energy generation. The chain is Soluble pyridine nucleotide transhydrogenase from Vibrio vulnificus (strain CMCP6).